Consider the following 155-residue polypeptide: Small ribosomal subunit protein uS7 (155 aa).

Belongs to the universal ribosomal protein uS7 family. In terms of assembly, part of the 30S ribosomal subunit. Contacts proteins S9 and S11.

One of the primary rRNA binding proteins, it binds directly to 16S rRNA where it nucleates assembly of the head domain of the 30S subunit. Is located at the subunit interface close to the decoding center, probably blocks exit of the E-site tRNA. The polypeptide is Small ribosomal subunit protein uS7 (Chlorobium chlorochromatii (strain CaD3)).